The chain runs to 686 residues: XK-related protein 5 (686 aa).

5 helical membrane passes run 33-53 (LLWG…QALS), 205-225 (HFWV…WLVA), 239-259 (LFNL…WDSP), 265-285 (VTFY…ATDF), and 297-317 (IAGV…YYSL). Disordered stretches follow at residues 339–387 (GDKT…PPEA), 448–468 (ALSA…LENS), and 490–592 (FASD…APFP). Residues 340–359 (DKTERRDSPRATDLAGKRTE) are compositionally biased toward basic and acidic residues. Composition is skewed to polar residues over residues 450 to 468 (SAQQ…LENS) and 490 to 509 (FASD…TQGE). The span at 523–536 (QGKGTGGQQRGGEG) shows a compositional bias: gly residues. Polar residues predominate over residues 550–567 (VATSSQQEGSPATLQTAH).

Belongs to the XK family.

It is found in the cell membrane. The sequence is that of XK-related protein 5 from Homo sapiens (Human).